Here is a 189-residue protein sequence, read N- to C-terminus: Glycerol-3-phosphate acyltransferase (189 aa).

The next 5 helical transmembrane spans lie at 1 to 21, 50 to 70, 77 to 97, 111 to 131, and 151 to 171; these read MFWL…AIVL, KLAI…VLLA, LHAQ…PLYF, MLMG…LLTF, and LLAW…VMIV.

This sequence belongs to the PlsY family. As to quaternary structure, probably interacts with PlsX.

It localises to the cell inner membrane. It carries out the reaction an acyl phosphate + sn-glycerol 3-phosphate = a 1-acyl-sn-glycero-3-phosphate + phosphate. It participates in lipid metabolism; phospholipid metabolism. Catalyzes the transfer of an acyl group from acyl-phosphate (acyl-PO(4)) to glycerol-3-phosphate (G3P) to form lysophosphatidic acid (LPA). This enzyme utilizes acyl-phosphate as fatty acyl donor, but not acyl-CoA or acyl-ACP. The polypeptide is Glycerol-3-phosphate acyltransferase (Pseudomonas putida (strain ATCC 700007 / DSM 6899 / JCM 31910 / BCRC 17059 / LMG 24140 / F1)).